A 248-amino-acid polypeptide reads, in one-letter code: Triosephosphate isomerase (248 aa).

A substrate-binding site is contributed by 9–11; sequence NWK. His-94 (electrophile) is an active-site residue. The active-site Proton acceptor is Glu-166. Substrate is bound by residues Gly-172, Ser-212, and 233–234; that span reads GG.

Belongs to the triosephosphate isomerase family. Homodimer.

It is found in the cytoplasm. It catalyses the reaction D-glyceraldehyde 3-phosphate = dihydroxyacetone phosphate. Its pathway is carbohydrate biosynthesis; gluconeogenesis. It functions in the pathway carbohydrate degradation; glycolysis; D-glyceraldehyde 3-phosphate from glycerone phosphate: step 1/1. Its function is as follows. Involved in the gluconeogenesis. Catalyzes stereospecifically the conversion of dihydroxyacetone phosphate (DHAP) to D-glyceraldehyde-3-phosphate (G3P). The polypeptide is Triosephosphate isomerase (Alkaliphilus oremlandii (strain OhILAs) (Clostridium oremlandii (strain OhILAs))).